A 351-amino-acid chain; its full sequence is UDP-N-acetylenolpyruvoylglucosamine reductase (351 aa).

An FAD-binding PCMH-type domain is found at 25–196 (HIQAQARWLL…AAVEFRLPLL (172 aa)). Residue Arg-173 is part of the active site. The active-site Proton donor is the Ser-246. The active site involves Glu-343.

It belongs to the MurB family. The cofactor is FAD.

Its subcellular location is the cytoplasm. The catalysed reaction is UDP-N-acetyl-alpha-D-muramate + NADP(+) = UDP-N-acetyl-3-O-(1-carboxyvinyl)-alpha-D-glucosamine + NADPH + H(+). It participates in cell wall biogenesis; peptidoglycan biosynthesis. Cell wall formation. The chain is UDP-N-acetylenolpyruvoylglucosamine reductase from Xylella fastidiosa (strain 9a5c).